A 422-amino-acid polypeptide reads, in one-letter code: Trigger factor (422 aa).

The 85-residue stretch at 158-242 (GDFAVVSLES…VKGLRKKELP (85 aa)) folds into the PPIase FKBP-type domain.

Belongs to the FKBP-type PPIase family. Tig subfamily.

The protein localises to the cytoplasm. It carries out the reaction [protein]-peptidylproline (omega=180) = [protein]-peptidylproline (omega=0). Functionally, involved in protein export. Acts as a chaperone by maintaining the newly synthesized protein in an open conformation. Functions as a peptidyl-prolyl cis-trans isomerase. This chain is Trigger factor, found in Solibacter usitatus (strain Ellin6076).